The chain runs to 134 residues: Large ribosomal subunit protein eL32 (134 aa).

The protein belongs to the eukaryotic ribosomal protein eL32 family.

The sequence is that of Large ribosomal subunit protein eL32 (RPL32) from Tetrahymena thermophila (strain SB210).